Here is a 202-residue protein sequence, read N- to C-terminus: Guanylate kinase (202 aa).

A Guanylate kinase-like domain is found at 3–181; the sequence is GNLFVVAAPS…ALDDLRAVVR (179 aa). 10–17 serves as a coordination point for ATP; sequence APSGAGKT.

It belongs to the guanylate kinase family.

The protein resides in the cytoplasm. It carries out the reaction GMP + ATP = GDP + ADP. Functionally, essential for recycling GMP and indirectly, cGMP. The protein is Guanylate kinase of Dechloromonas aromatica (strain RCB).